A 347-amino-acid chain; its full sequence is Protein RecA (347 aa).

67–74 serves as a coordination point for ATP; that stretch reads GPESSGKT.

This sequence belongs to the RecA family.

The protein resides in the cytoplasm. Can catalyze the hydrolysis of ATP in the presence of single-stranded DNA, the ATP-dependent uptake of single-stranded DNA by duplex DNA, and the ATP-dependent hybridization of homologous single-stranded DNAs. It interacts with LexA causing its activation and leading to its autocatalytic cleavage. The chain is Protein RecA from Helicobacter pylori (strain G27).